The following is a 275-amino-acid chain: NADPH-dependent 7-cyano-7-deazaguanine reductase (275 aa).

81-83 is a binding site for substrate; it reads VES. 83-84 is an NADPH binding site; sequence SK. The active-site Thioimide intermediate is C182. D189 serves as the catalytic Proton donor. Residue 221 to 222 participates in substrate binding; the sequence is HE. Residue 250-251 coordinates NADPH; that stretch reads RG.

Belongs to the GTP cyclohydrolase I family. QueF type 2 subfamily. Homodimer.

Its subcellular location is the cytoplasm. The enzyme catalyses 7-aminomethyl-7-carbaguanine + 2 NADP(+) = 7-cyano-7-deazaguanine + 2 NADPH + 3 H(+). It functions in the pathway tRNA modification; tRNA-queuosine biosynthesis. Functionally, catalyzes the NADPH-dependent reduction of 7-cyano-7-deazaguanine (preQ0) to 7-aminomethyl-7-deazaguanine (preQ1). The protein is NADPH-dependent 7-cyano-7-deazaguanine reductase of Polaromonas sp. (strain JS666 / ATCC BAA-500).